A 527-amino-acid chain; its full sequence is Low-affinity Na(+)/H(+) antiporter NhaS1 (527 aa).

11 helical membrane passes run 18-38, 41-61, 94-114, 126-146, 169-189, 196-216, 240-260, 276-296, 311-331, 352-372, and 380-400; these read FLIV…VPIL, IPYT…DVKL, WFPI…GIAF, IAFL…IALF, VAVV…TFDL, FVTV…SLSL, ILAE…GMVL, IVSI…FLLI, LILI…FGLS, TVLW…LSVP, and AIID…GLTT.

This sequence belongs to the monovalent cation:proton antiporter 1 (CPA1) transporter (TC 2.A.36) family.

The protein resides in the cell membrane. Its function is as follows. Na(+)/H(+) antiporter that extrudes sodium in exchange for external protons. Might be able to function at relatively high concentrations of Na(+) ions. Also has Li(+)/H(+) antiport activity under K(+)-rich conditions, but it might not have any physiological relevance. The polypeptide is Low-affinity Na(+)/H(+) antiporter NhaS1 (nhaS1) (Synechocystis sp. (strain ATCC 27184 / PCC 6803 / Kazusa)).